We begin with the raw amino-acid sequence, 498 residues long: Transcription factor kayak (498 aa).

The segment covering 108 to 127 (ASLGQGSESEDSNASYNDTQ) has biased composition (polar residues). 2 disordered regions span residues 108 to 144 (ASLGQGSESEDSNASYNDTQMNEEQDTTDTSSAHTDS) and 177 to 234 (GSAS…KRRV). 2 stretches are compositionally biased toward low complexity: residues 135–144 (TDTSSAHTDS) and 177–191 (GSASVGSSNANTSNT). The bZIP domain occupies 212-275 (EQKRAVRRER…KQLEYLLATH (64 aa)). Residues 214–233 (KRAVRRERNKQAAARCRKRR) form a basic motif region. The tract at residues 240–247 (LTEEVEQL) is leucine-zipper. Low complexity predominate over residues 304–325 (AGSSGSGASSHHNHNSNDSSNG). Disordered regions lie at residues 304-345 (AGSS…SPLD) and 465-498 (TPVSGPLVPNSSSTNKHPLELPTPTAEPSKLVSL). Residues 333–343 (TLNSTGRSNSP) show a composition bias toward polar residues. A Phosphoserine modification is found at S342.

The protein belongs to the bZIP family. Fos subfamily. In terms of assembly, homodimer. Heterodimer with Jra. The kay-Jra heterodimer binds more stably to the AP-1 site than either of the two proteins alone.

The protein localises to the nucleus. In terms of biological role, developmentally regulated transcription factor AP-1 binds and recognizes the enhancer DNA sequence: 5'-TGA[CG]TCA-3'. May play a role in the function or determination of a particular subset of cells in the developing embryo. It is able to carry out its function either independently of or in conjunction with Jra. The protein is Transcription factor kayak of Drosophila simulans (Fruit fly).